A 262-amino-acid polypeptide reads, in one-letter code: Deaminated glutathione amidase (262 aa).

Residues 1 to 238 (MLVAAGQFAV…PALIMAEVTP (238 aa)) form the CN hydrolase domain. The active-site Proton acceptor is E40. K110 (proton donor) is an active-site residue. Residue C147 is the Nucleophile of the active site.

Belongs to the carbon-nitrogen hydrolase superfamily. NIT1/NIT2 family.

It carries out the reaction N-(4-oxoglutaryl)-L-cysteinylglycine + H2O = L-cysteinylglycine + 2-oxoglutarate. In terms of biological role, hydrolyzes deaminated glutathione (dGSH) to 2-oxoglutarate and L-cysteinylglycine, and no activity on glutathione or L-glutamine. May function as a metabolite repair enzyme. This chain is Deaminated glutathione amidase (ybeM), found in Escherichia coli O157:H7.